The chain runs to 78 residues: Large ribosomal subunit protein bL28 (78 aa).

It belongs to the bacterial ribosomal protein bL28 family.

The sequence is that of Large ribosomal subunit protein bL28 from Glaesserella parasuis serovar 5 (strain SH0165) (Haemophilus parasuis).